The chain runs to 189 residues: Putative ankyrin repeat protein TV1425 (189 aa).

4 ANK repeats span residues 31-60 (YNRT…KLED), 64-93 (EGST…NVNT), 97-126 (SGKT…NVND), and 130-159 (EGET…DISA).

This Thermoplasma volcanium (strain ATCC 51530 / DSM 4299 / JCM 9571 / NBRC 15438 / GSS1) protein is Putative ankyrin repeat protein TV1425.